Here is a 210-residue protein sequence, read N- to C-terminus: Thiamine-phosphate synthase (210 aa).

4-amino-2-methyl-5-(diphosphooxymethyl)pyrimidine contacts are provided by residues 43 to 47 (QLREK) and asparagine 75. Mg(2+) is bound by residues aspartate 76 and aspartate 95. Serine 114 is a 4-amino-2-methyl-5-(diphosphooxymethyl)pyrimidine binding site. Residue 140 to 142 (TST) participates in 2-[(2R,5Z)-2-carboxy-4-methylthiazol-5(2H)-ylidene]ethyl phosphate binding. Lysine 143 contributes to the 4-amino-2-methyl-5-(diphosphooxymethyl)pyrimidine binding site. Residues glycine 170 and 190–191 (IS) contribute to the 2-[(2R,5Z)-2-carboxy-4-methylthiazol-5(2H)-ylidene]ethyl phosphate site.

It belongs to the thiamine-phosphate synthase family. The cofactor is Mg(2+).

The catalysed reaction is 2-[(2R,5Z)-2-carboxy-4-methylthiazol-5(2H)-ylidene]ethyl phosphate + 4-amino-2-methyl-5-(diphosphooxymethyl)pyrimidine + 2 H(+) = thiamine phosphate + CO2 + diphosphate. It catalyses the reaction 2-(2-carboxy-4-methylthiazol-5-yl)ethyl phosphate + 4-amino-2-methyl-5-(diphosphooxymethyl)pyrimidine + 2 H(+) = thiamine phosphate + CO2 + diphosphate. The enzyme catalyses 4-methyl-5-(2-phosphooxyethyl)-thiazole + 4-amino-2-methyl-5-(diphosphooxymethyl)pyrimidine + H(+) = thiamine phosphate + diphosphate. It functions in the pathway cofactor biosynthesis; thiamine diphosphate biosynthesis; thiamine phosphate from 4-amino-2-methyl-5-diphosphomethylpyrimidine and 4-methyl-5-(2-phosphoethyl)-thiazole: step 1/1. Functionally, condenses 4-methyl-5-(beta-hydroxyethyl)thiazole monophosphate (THZ-P) and 2-methyl-4-amino-5-hydroxymethyl pyrimidine pyrophosphate (HMP-PP) to form thiamine monophosphate (TMP). This is Thiamine-phosphate synthase from Clostridioides difficile (strain 630) (Peptoclostridium difficile).